The primary structure comprises 347 residues: Olfactory receptor 13C3 (347 aa).

Residues M1–I55 are Extracellular-facing. N-linked (GlcNAc...) asparagine glycosylation is present at N35. Residues V56–I76 traverse the membrane as a helical segment. At I77–H84 the chain is on the cytoplasmic side. The helical transmembrane segment at F85–S105 threads the bilayer. Topologically, residues S106–V129 are extracellular. An intrachain disulfide couples C127 to C219. The helical transmembrane segment at Q130–F150 threads the bilayer. Residues D151–V169 are Cytoplasmic-facing. The helical transmembrane segment at A170–T190 threads the bilayer. At L191–I227 the chain is on the extracellular side. Residues T228–S247 traverse the membrane as a helical segment. The Cytoplasmic segment spans residues Y248–A267. Residues F268 to M288 form a helical membrane-spanning segment. The Extracellular portion of the chain corresponds to Y289 to D307. A helical transmembrane segment spans residues K308 to L328. Residues R329–H347 lie on the Cytoplasmic side of the membrane.

Belongs to the G-protein coupled receptor 1 family.

It localises to the cell membrane. Odorant receptor. The sequence is that of Olfactory receptor 13C3 (OR13C3) from Homo sapiens (Human).